Here is a 482-residue protein sequence, read N- to C-terminus: MTKSTVLSSYKLFAFIFIFRLANSFAIETFFQADEFFQALEPAHHFVYGYGYLTWEWKQQLRSAIHPLIYVLGYKLVGDNTTLVCISPKVINALIAAIGEYNLYKFIIVYDSEKLAWITLMLSLFNPFNWYVITRSFSNNLEMVFTVLALRFWPWNKKINGRWYISLGFGFVSCIIRPTNILIWIPLGIWLLISIRITLKWVALSFLEVVLILLINTALDYYFYQKLTFPLYNFLEFNVFKNLSIFYGTAPWHFYIFQAIPLMLMLYLPLMIYGLKKNILLLTGLFYIIGFSLIQHKEFRFIYPIHPILLYFTARGYVKFKPKFVLIGILLNICIGLFFTNVHERGVIDLTKYLATQQTPSVGFITPCHSTPWQSYFHNPNLDTNSWFLACEPPLHLNKPSMEEIRHYRDQSDQFYDAPESFLQTHLGKDLPKTEQLVVFEPLEPLMNDYLGREYYECQRFYNSFFHWDSRRDGDIIVYCRN.

Residues 12–32 (LFAFIFIFRLANSFAIETFFQ) form a helical membrane-spanning segment. N80 carries N-linked (GlcNAc...) asparagine glycosylation. The next 4 helical transmembrane spans lie at 114–134 (KLAW…YVIT), 137–155 (FSNN…FWPW), 175–195 (IIRP…LISI), and 199–219 (LKWV…NTAL). N242 is a glycosylation site (N-linked (GlcNAc...) asparagine). A run of 3 helical transmembrane segments spans residues 252–272 (WHFY…PLMI), 274–294 (GLKK…FSLI), and 324–344 (FVLI…NVHE).

It belongs to the glycosyltransferase 22 family. PIGB subfamily.

It localises to the endoplasmic reticulum membrane. It functions in the pathway glycolipid biosynthesis; glycosylphosphatidylinositol-anchor biosynthesis. Functionally, mannosyltransferase involved in glycosylphosphatidylinositol-anchor biosynthesis. Transfers the third mannose to Man2-GlcN-acyl-PI during GPI precursor assembly. In Candida albicans (strain SC5314 / ATCC MYA-2876) (Yeast), this protein is GPI mannosyltransferase 3 (GPI10).